The following is a 918-amino-acid chain: DNA ligase 1 (918 aa).

Residues 1–15 (MQRSIMSFFQPTTTE) show a composition bias toward polar residues. The segment at 1–271 (MQRSIMSFFQ…DPTNYNPSKS (271 aa)) is disordered. A compositionally biased stretch (basic and acidic residues) spans 16–54 (GKAKKPEKEIPSSIREKEPPPKVALKERNRAVPESDSPV). Phosphoserine occurs at positions 50, 52, 66, and 67. The residue at position 78 (T78) is a Phosphothreonine. Over residues 81 to 92 (VQKPVSDSKQSS) the composition is skewed to low complexity. Positions 100–114 (PENSPVFNCSPSMDI) are enriched in polar residues. Over residues 120–130 (PKRRTARKQLP) the composition is skewed to basic residues. At K145 the chain carries N6-acetyllysine. T195 carries the phosphothreonine modification. K227 carries the N6-acetyllysine modification. Phosphoserine is present on residues S230 and S231. Position 234 is a phosphothreonine (T234). A compositionally biased stretch (basic and acidic residues) spans 240–259 (VKTEVKQEESDTPRKEETKG). E566 contacts ATP. K568 functions as the N6-AMP-lysine intermediate in the catalytic mechanism. Positions 573 and 621 each coordinate ATP. Position 621 (E621) interacts with Mg(2+). The tract at residues 642–644 (KRK) is interaction with target DNA. Residue E720 participates in Mg(2+) binding. Residues K725 and K744 each coordinate ATP. Residue T798 is modified to Phosphothreonine. Phosphoserine is present on residues S801, S908, S909, and S913. Positions 881 to 918 (DKQPEQATTSDQVASLYRKQSQIQNQQSSDLDSDVEDY) are disordered. The span at 885-910 (EQATTSDQVASLYRKQSQIQNQQSSD) shows a compositional bias: polar residues.

The protein belongs to the ATP-dependent DNA ligase family. Interacts with PCNA. Interacts with POLB. It depends on Mg(2+) as a cofactor.

The protein resides in the nucleus. The catalysed reaction is ATP + (deoxyribonucleotide)n-3'-hydroxyl + 5'-phospho-(deoxyribonucleotide)m = (deoxyribonucleotide)n+m + AMP + diphosphate.. DNA ligase that seals nicks in double-stranded during DNA repair. Also involved in DNA replication and DNA recombination. The chain is DNA ligase 1 (Lig1) from Rattus norvegicus (Rat).